Reading from the N-terminus, the 45-residue chain is Cytochrome b559 subunit beta (45 aa).

A helical membrane pass occupies residues 20–36 (WIAVHTLAVPTVFFLGA). A heme-binding site is contributed by H24.

This sequence belongs to the PsbE/PsbF family. In terms of assembly, heterodimer of an alpha subunit and a beta subunit. PSII is composed of 1 copy each of membrane proteins PsbA, PsbB, PsbC, PsbD, PsbE, PsbF, PsbH, PsbI, PsbJ, PsbK, PsbL, PsbM, PsbT, PsbX, PsbY, PsbZ, Psb30/Ycf12, peripheral proteins PsbO, CyanoQ (PsbQ), PsbU, PsbV and a large number of cofactors. It forms dimeric complexes. Heme b is required as a cofactor.

The protein resides in the cellular thylakoid membrane. Functionally, this b-type cytochrome is tightly associated with the reaction center of photosystem II (PSII). PSII is a light-driven water:plastoquinone oxidoreductase that uses light energy to abstract electrons from H(2)O, generating O(2) and a proton gradient subsequently used for ATP formation. It consists of a core antenna complex that captures photons, and an electron transfer chain that converts photonic excitation into a charge separation. The sequence is that of Cytochrome b559 subunit beta from Nostoc sp. (strain PCC 7120 / SAG 25.82 / UTEX 2576).